We begin with the raw amino-acid sequence, 408 residues long: Protein BTN1 (408 aa).

The first 30 residues, 1-30 (MSDKSHQIYCYFWLFGLINNVLYVVILSAA), serve as a signal peptide directing secretion. 7 consecutive transmembrane segments (helical) span residues 42-62 (LVLL…PFFI), 80-100 (LGMF…ISFA), 128-148 (SGTG…TSIF), 150-170 (VPVK…LFYF), 238-258 (TVYL…LFPI), 323-343 (WFYV…EGFL), and 369-389 (GAVS…GLGL).

The protein belongs to the battenin family.

The protein localises to the vacuole membrane. Its function is as follows. Plays a role in vacuolar arginine transport. Involved in pH homeostasis. May be involved in ion homeostasis together with IST2. Not necessary for mitochondrial function or ATP synthase degradation. The protein is Protein BTN1 (YHC3) of Saccharomyces cerevisiae (strain ATCC 204508 / S288c) (Baker's yeast).